A 484-amino-acid polypeptide reads, in one-letter code: tRNA sulfurtransferase (484 aa).

Residues 63–167 (QAFGERLACI…RDKLYMVTKR (105 aa)) enclose the THUMP domain. ATP-binding positions include 185-186 (LI), Lys-267, Gly-289, and Gln-298. An intrachain disulfide couples Cys-346 to Cys-458. The Rhodanese domain occupies 406-484 (IETNEVVIDI…GYTNVKVYRP (79 aa)). Cys-458 acts as the Cysteine persulfide intermediate in catalysis.

Belongs to the ThiI family.

The protein localises to the cytoplasm. It carries out the reaction [ThiI sulfur-carrier protein]-S-sulfanyl-L-cysteine + a uridine in tRNA + 2 reduced [2Fe-2S]-[ferredoxin] + ATP + H(+) = [ThiI sulfur-carrier protein]-L-cysteine + a 4-thiouridine in tRNA + 2 oxidized [2Fe-2S]-[ferredoxin] + AMP + diphosphate. The catalysed reaction is [ThiS sulfur-carrier protein]-C-terminal Gly-Gly-AMP + S-sulfanyl-L-cysteinyl-[cysteine desulfurase] + AH2 = [ThiS sulfur-carrier protein]-C-terminal-Gly-aminoethanethioate + L-cysteinyl-[cysteine desulfurase] + A + AMP + 2 H(+). The protein operates within cofactor biosynthesis; thiamine diphosphate biosynthesis. Functionally, catalyzes the ATP-dependent transfer of a sulfur to tRNA to produce 4-thiouridine in position 8 of tRNAs, which functions as a near-UV photosensor. Also catalyzes the transfer of sulfur to the sulfur carrier protein ThiS, forming ThiS-thiocarboxylate. This is a step in the synthesis of thiazole, in the thiamine biosynthesis pathway. The sulfur is donated as persulfide by IscS. The protein is tRNA sulfurtransferase of Shewanella putrefaciens (strain CN-32 / ATCC BAA-453).